Here is a 288-residue protein sequence, read N- to C-terminus: Ankyrin repeat and SOCS box protein 8 (288 aa).

Phosphoserine is present on S17. ANK repeat units follow at residues 52-81 (GTLK…EVNA), 85-113 (YNRT…NPNA), 117-146 (NRDT…SVNA), and 150-179 (NNDT…EVRV). Residues 235–288 (QLCEKLTVLCSAPGTLKTLARYAVRRSLGLQYLPDAVKGLPLPASLKEYLLLLE) form the SOCS box domain.

This sequence belongs to the ankyrin SOCS box (ASB) family. In terms of assembly, interacts with TBK1; this interaction promotes TBK1 proteasomal degradation. In terms of processing, phosphorylated by TBK1.

The protein resides in the cytoplasm. It functions in the pathway protein modification; protein ubiquitination. In terms of biological role, may be a substrate-recognition component of a SCF-like ECS (Elongin-Cullin-SOCS-box protein) E3 ubiquitin-protein ligase complex which mediates the ubiquitination and subsequent proteasomal degradation of target proteins. Inhibits IFN-beta production through the IRF3 signaling pathway by targeting TBK1 via 'Lys-48'-linked ubiquitination, leading to its proteasomal degradation. This is Ankyrin repeat and SOCS box protein 8 (ASB8) from Macaca fascicularis (Crab-eating macaque).